The following is a 67-amino-acid chain: DNA-directed RNA polymerase subunit omega (67 aa).

It belongs to the RNA polymerase subunit omega family. In terms of assembly, the RNAP catalytic core consists of 2 alpha, 1 beta, 1 beta' and 1 omega subunit. When a sigma factor is associated with the core the holoenzyme is formed, which can initiate transcription.

It carries out the reaction RNA(n) + a ribonucleoside 5'-triphosphate = RNA(n+1) + diphosphate. Its function is as follows. Promotes RNA polymerase assembly. Latches the N- and C-terminal regions of the beta' subunit thereby facilitating its interaction with the beta and alpha subunits. This Bordetella petrii (strain ATCC BAA-461 / DSM 12804 / CCUG 43448) protein is DNA-directed RNA polymerase subunit omega.